The sequence spans 719 residues: DNA replication licensing factor MCM7 (719 aa).

Residue A2 is modified to N-acetylalanine. Glycyl lysine isopeptide (Lys-Gly) (interchain with G-Cter in SUMO2) cross-links involve residues K15 and K28. Phosphoserine is present on residues S121 and S314. The region spanning 332-538 is the MCM domain; it reads FYEKLAASIA…NDLRLAQHIT (207 aa). Y345 serves as a coordination point for ATP. The residue at position 365 (S365) is a Phosphoserine. ATP contacts are provided by G384, A386, K387, S388, and N489. A Phosphoserine modification is found at S500. The Arginine finger signature appears at 513-516; the sequence is SRFD. Position 514 (R514) interacts with ATP. Residues 521 to 564 are interaction with RAD17; the sequence is IQDRPDRDNDLRLAQHITYVHQHSRQPPAQFEPLDMKLMRRYIA. An interaction with ATRIP region spans residues 577–719; it reads LADYITAAYV…NTARTRITFV (143 aa). R604 contacts ATP. Residue S678 is modified to Phosphoserine.

It belongs to the MCM family. Component of the MCM2-7 complex. The complex forms a toroidal hexameric ring with the proposed subunit order MCM2-MCM6-MCM4-MCM7-MCM3-MCM5. Component of the CMG helicase complex, a hexameric ring of related MCM2-7 subunits stabilized by CDC45 and the tetrameric GINS complex. Interacts with the ATR-ATRIP complex and with RAD17. Interacts with TIPIN. Interacts with MCMBP. Interacts with ANKRD17. Component of the replisome complex composed of at least DONSON, MCM2, MCM7, PCNA and TICRR. In terms of processing, O-glycosylated (O-GlcNAcylated), in a cell cycle-dependent manner. Ubiquitinated by ECS(LRR1) E3 ubiquitin-protein ligase complex when forks converge following formation of DNA interstrand cross-links. During mitosis, ubiquitinated by TRAIP when forks converge following formation of DNA interstrand cross-links. Short ubiquitin chains on MCM7 promote recruitment of DNA glycosylase NEIL3. If the interstrand cross-link cannot be cleaved by NEIL3, the ubiquitin chains continue to grow on MCM7, promoting the unloading of the CMG helicase complex by the VCP/p97 ATPase.

The protein resides in the nucleus. It localises to the chromosome. The catalysed reaction is ATP + H2O = ADP + phosphate + H(+). In terms of biological role, acts as a component of the MCM2-7 complex (MCM complex) which is the replicative helicase essential for 'once per cell cycle' DNA replication initiation and elongation in eukaryotic cells. Core component of CDC45-MCM-GINS (CMG) helicase, the molecular machine that unwinds template DNA during replication, and around which the replisome is built. The active ATPase sites in the MCM2-7 ring are formed through the interaction surfaces of two neighboring subunits such that a critical structure of a conserved arginine finger motif is provided in trans relative to the ATP-binding site of the Walker A box of the adjacent subunit. The six ATPase active sites, however, are likely to contribute differentially to the complex helicase activity. Required for S-phase checkpoint activation upon UV-induced damage. This is DNA replication licensing factor MCM7 (MCM7) from Bos taurus (Bovine).